The sequence spans 329 residues: D-alanine--D-alanine ligase (329 aa).

The region spanning 120–326 (KLWYDAIGIP…FHEFLADCIN (207 aa)) is the ATP-grasp domain. Residue 150–205 (AFDKWGKVFVKAARQGSSVGCYSVTNKQSVSQAVNDAFGYSEQVLVEKSVKPRELE) coordinates ATP. Mg(2+)-binding residues include Asp-280, Glu-293, and Asn-295.

The protein belongs to the D-alanine--D-alanine ligase family. Requires Mg(2+) as cofactor. Mn(2+) is required as a cofactor.

The protein localises to the cytoplasm. It carries out the reaction 2 D-alanine + ATP = D-alanyl-D-alanine + ADP + phosphate + H(+). It participates in cell wall biogenesis; peptidoglycan biosynthesis. Its function is as follows. Cell wall formation. The protein is D-alanine--D-alanine ligase of Vibrio campbellii (strain ATCC BAA-1116).